The chain runs to 366 residues: MERDLERGPPGPPRPPLGPPLSSSIGLALLLLLLALLFWLYIVLSNWTGGALLVLYSFALMLIIIILIIFIFRRDLLCPLGGLGLLLLMVTLLLIALWNLHGQALYLGIVLFIFGCLLVLGLWIYFLEILWRLGATIWQLLAFILAFFLAIILLIIALYLQQNWWTLLVDLLWLLLFMAILIWMYFHGPRHTDEHHHDDSLPHPQQATDDSSHESDSNSNEGRHHLLVSGAGDGPPLCSQNLGAPGGGPDNGPQDPDNTDDNGPQDPDNTDDNGNTDDNGPQDPDNTDDNGPHDPLPHNPSDSAGNDGGPPNLTEEVENKGGDRGPPSMTDGGGGDPHLPTLLLGTSGSGGDDDDPHGPVQLSYYD.

Residues 1-23 lie on the Cytoplasmic side of the membrane; the sequence is MERDLERGPPGPPRPPLGPPLSS. A helical membrane pass occupies residues 24-44; sequence SIGLALLLLLLALLFWLYIVL. Topologically, residues 45-51 are extracellular; it reads SNWTGGA. A helical membrane pass occupies residues 52 to 72; that stretch reads LLVLYSFALMLIIIILIIFIF. Topologically, residues 73-75 are cytoplasmic; that stretch reads RRD. The chain crosses the membrane as a helical span at residues 76 to 96; the sequence is LLCPLGGLGLLLLMVTLLLIA. At 97 to 106 the chain is on the extracellular side; sequence LWNLHGQALY. A helical transmembrane segment spans residues 107–127; it reads LGIVLFIFGCLLVLGLWIYFL. The Cytoplasmic portion of the chain corresponds to 128-139; that stretch reads EILWRLGATIWQ. Residues 140–160 traverse the membrane as a helical segment; the sequence is LLAFILAFFLAIILLIIALYL. Residues 161–163 lie on the Extracellular side of the membrane; the sequence is QQN. A helical membrane pass occupies residues 164-184; that stretch reads WWTLLVDLLWLLLFMAILIWM. Residues 185-366 are Cytoplasmic-facing; it reads YFHGPRHTDE…HGPVQLSYYD (182 aa). A CTAR1 region spans residues 194 to 232; the sequence is EHHHDDSLPHPQQATDDSSHESDSNSNEGRHHLLVSGAG. Residues 194–366 form a disordered region; sequence EHHHDDSLPH…HGPVQLSYYD (173 aa). The Interaction with host TRAF proteins signature appears at 204 to 208; the sequence is PQQAT. Basic and acidic residues predominate over residues 210-224; the sequence is DSSHESDSNSNEGRH. Composition is skewed to low complexity over residues 251 to 267 and 337 to 346; these read NGPQDPDNTDDNGPQDP and PHLPTLLLGT. Residues 332-366 form a CTAR2 region; it reads GGGGDPHLPTLLLGTSGSGGDDDDPHGPVQLSYYD.

The protein belongs to the herpesviridae LMP-1 family. In terms of assembly, interacts (via PXQXT motif) with host tumor necrosis factor receptor-associated factor (TRAF) proteins TRAF1, TRAF2, TRAF3 and TRAF5. Interacts with human protein ZMYND11; leading to negatively regulate NF-kappa-B activation. Interacts with host UBE2I; this interaction induces the sumoylation of various cellular proteins. Interacts with host IRF7. Post-translationally, ubiquitinated on the N-terminus.

The protein resides in the host cell membrane. Acts as a CD40 functional homolog to prevent apoptosis of infected B-lymphocytes and drive their proliferation. Functions as a constitutively active tumor necrosis factor receptor that induces the activation of several signaling pathways, including those of the NF-kappa-B family. LMP1 signaling leads to up-regulation of antiapoptotic proteins and provide growth signals in latently infected cells. Interacts with host UBE2I and subsequently affects the sumoylation state of several cellular proteins. For example, induces the sumoylation of host IRF7 thereby limiting its transcriptional activity and modulating the activation of innate immune responses. Also inhibits host IFN-alpha-stimulated STAT2 nuclear translocation and interferon-stimulated response element transcriptional activity by interacting with and inhibiting host TYK2. Induces SUMO expression during viral latency thereby dysregulating the host sumoylation processes. This chain is Latent membrane protein 1 (LMP1), found in Homo sapiens (Human).